The following is a 372-amino-acid chain: L-selectin (372 aa).

Residues methionine 1 to cysteine 28 form the signal peptide. A propeptide spanning residues aspartate 29 to cysteine 38 is cleaved from the precursor. The Extracellular segment spans residues tryptophan 39–asparagine 332. Residues lysine 55–cysteine 155 enclose the C-type lectin domain. Intrachain disulfides connect cysteine 57–cysteine 155, cysteine 128–cysteine 147, cysteine 128–cysteine 160, cysteine 160–cysteine 171, cysteine 165–cysteine 180, cysteine 182–cysteine 191, cysteine 197–cysteine 241, cysteine 227–cysteine 254, cysteine 259–cysteine 303, and cysteine 289–cysteine 316. 2 N-linked (GlcNAc...) asparagine glycosylation sites follow: asparagine 60 and asparagine 104. Glutamate 118, asparagine 120, glutamate 126, asparagine 143, and aspartate 144 together coordinate Ca(2+). The 37-residue stretch at tyrosine 156–glutamine 192 folds into the EGF-like domain. Asparagine 177 is a glycosylation site (N-linked (GlcNAc...) asparagine). Sushi domains lie at valine 195–valine 256 and valine 257–glutamate 318. Residues asparagine 216, asparagine 226, asparagine 246, asparagine 278, asparagine 288, asparagine 308, and asparagine 320 are each glycosylated (N-linked (GlcNAc...) asparagine). The chain crosses the membrane as a helical span at residues proline 333–alanine 355. At arginine 356–tyrosine 372 the chain is on the cytoplasmic side.

Belongs to the selectin/LECAM family. In terms of assembly, interaction with SELPLG/PSGL1 and PODXL2 is required for promoting recruitment and rolling of leukocytes. This interaction is dependent on the sialyl Lewis X glycan modification of SELPLG and PODXL2, and tyrosine sulfation modifications of SELPLG. Sulfation on 'Tyr-51' of SELPLG is important for L-selectin binding. N-glycosylated. As to expression, predominantly expressed in lymphoid tissue.

Its subcellular location is the cell membrane. Functionally, calcium-dependent lectin that mediates cell adhesion by binding to glycoproteins on neighboring cells. Mediates the adherence of lymphocytes to endothelial cells of high endothelial venules in peripheral lymph nodes. Promotes initial tethering and rolling of leukocytes in endothelia. This is L-selectin (Sell) from Mus musculus (Mouse).